A 175-amino-acid chain; its full sequence is Glutamyl-tRNA(Gln) amidotransferase subunit F, mitochondrial (175 aa).

The transit peptide at 1-19 directs the protein to the mitochondrion; that stretch reads MLKVSARHAPVLRLPRRFY.

The protein belongs to the GatF family. In terms of assembly, subunit of the heterotrimeric GatFAB amidotransferase (AdT) complex, composed of A, B and F subunits.

It is found in the mitochondrion inner membrane. The catalysed reaction is L-glutamyl-tRNA(Gln) + L-glutamine + ATP + H2O = L-glutaminyl-tRNA(Gln) + L-glutamate + ADP + phosphate + H(+). Allows the formation of correctly charged Gln-tRNA(Gln) through the transamidation of misacylated Glu-tRNA(Gln) in the mitochondria. The reaction takes place in the presence of glutamine and ATP through an activated gamma-phospho-Glu-tRNA(Gln). Required for proper protein synthesis within the mitochondrion. This Lachancea thermotolerans (strain ATCC 56472 / CBS 6340 / NRRL Y-8284) (Yeast) protein is Glutamyl-tRNA(Gln) amidotransferase subunit F, mitochondrial.